The chain runs to 510 residues: ATP synthase subunit alpha (510 aa).

ATP is bound at residue 169-176 (GDRQTGKT).

It belongs to the ATPase alpha/beta chains family. As to quaternary structure, F-type ATPases have 2 components, CF(1) - the catalytic core - and CF(0) - the membrane proton channel. CF(1) has five subunits: alpha(3), beta(3), gamma(1), delta(1), epsilon(1). CF(0) has three main subunits: a(1), b(2) and c(9-12). The alpha and beta chains form an alternating ring which encloses part of the gamma chain. CF(1) is attached to CF(0) by a central stalk formed by the gamma and epsilon chains, while a peripheral stalk is formed by the delta and b chains.

It is found in the cell inner membrane. It catalyses the reaction ATP + H2O + 4 H(+)(in) = ADP + phosphate + 5 H(+)(out). Functionally, produces ATP from ADP in the presence of a proton gradient across the membrane. The alpha chain is a regulatory subunit. The protein is ATP synthase subunit alpha of Rickettsia conorii (strain ATCC VR-613 / Malish 7).